A 115-amino-acid polypeptide reads, in one-letter code: Large ribosomal subunit protein uL18 (115 aa).

A disordered region spans residues 1–20; that stretch reads MKYTKQEARKRRHYRVRSKV. Residues 8-18 show a composition bias toward basic residues; the sequence is ARKRRHYRVRS.

Belongs to the universal ribosomal protein uL18 family. Part of the 50S ribosomal subunit; part of the 5S rRNA/L5/L18/L25 subcomplex. Contacts the 5S and 23S rRNAs.

In terms of biological role, this is one of the proteins that bind and probably mediate the attachment of the 5S RNA into the large ribosomal subunit, where it forms part of the central protuberance. In Mesoplasma florum (strain ATCC 33453 / NBRC 100688 / NCTC 11704 / L1) (Acholeplasma florum), this protein is Large ribosomal subunit protein uL18.